We begin with the raw amino-acid sequence, 426 residues long: Gamma-glutamyl phosphate reductase (426 aa).

It belongs to the gamma-glutamyl phosphate reductase family.

The protein resides in the cytoplasm. The catalysed reaction is L-glutamate 5-semialdehyde + phosphate + NADP(+) = L-glutamyl 5-phosphate + NADPH + H(+). It functions in the pathway amino-acid biosynthesis; L-proline biosynthesis; L-glutamate 5-semialdehyde from L-glutamate: step 2/2. Its function is as follows. Catalyzes the NADPH-dependent reduction of L-glutamate 5-phosphate into L-glutamate 5-semialdehyde and phosphate. The product spontaneously undergoes cyclization to form 1-pyrroline-5-carboxylate. This Ralstonia nicotianae (strain ATCC BAA-1114 / GMI1000) (Ralstonia solanacearum) protein is Gamma-glutamyl phosphate reductase.